Reading from the N-terminus, the 300-residue chain is DNA repair protein RecO (300 aa).

The protein belongs to the RecO family.

In terms of biological role, involved in DNA repair and RecF pathway recombination. This is DNA repair protein RecO from Nostoc punctiforme (strain ATCC 29133 / PCC 73102).